We begin with the raw amino-acid sequence, 552 residues long: Protein FAM234A (552 aa).

The segment at 1–40 (MMDDKDLEAEIHPLKNEDKKSQENLGNLPKTEDNLKNKPV) is disordered. Residues 1-49 (MMDDKDLEAEIHPLKNEDKKSQENLGNLPKTEDNLKNKPVPSRLSRCRT) lie on the Cytoplasmic side of the membrane. Residues 8 to 22 (EAEIHPLKNEDKKSQ) show a composition bias toward basic and acidic residues. Phosphoserine is present on serine 21. Residues 50–70 (VAFFLSLFICLFVVFVLSFII) traverse the membrane as a helical; Signal-anchor for type II membrane protein segment. Over 71–552 (PCPDRPSSED…FSRLRYRSEV (482 aa)) the chain is Extracellular. N-linked (GlcNAc...) asparagine glycans are attached at residues asparagine 116, asparagine 119, asparagine 314, and asparagine 473.

This sequence belongs to the FAM234 family.

The protein localises to the membrane. In Rattus norvegicus (Rat), this protein is Protein FAM234A (Fam234a).